The primary structure comprises 283 residues: Pantothenate synthetase (283 aa).

30-37 serves as a coordination point for ATP; sequence MGALHEGH. Histidine 37 (proton donor) is an active-site residue. Glutamine 61 is a binding site for (R)-pantoate. Glutamine 61 contributes to the beta-alanine binding site. 147-150 serves as a coordination point for ATP; that stretch reads GEKD. Position 153 (glutamine 153) interacts with (R)-pantoate. ATP contacts are provided by residues isoleucine 176 and 184 to 187; that span reads VSSR.

Belongs to the pantothenate synthetase family. In terms of assembly, homodimer.

It localises to the cytoplasm. The catalysed reaction is (R)-pantoate + beta-alanine + ATP = (R)-pantothenate + AMP + diphosphate + H(+). It participates in cofactor biosynthesis; (R)-pantothenate biosynthesis; (R)-pantothenate from (R)-pantoate and beta-alanine: step 1/1. Its function is as follows. Catalyzes the condensation of pantoate with beta-alanine in an ATP-dependent reaction via a pantoyl-adenylate intermediate. In Chlorobium phaeobacteroides (strain DSM 266 / SMG 266 / 2430), this protein is Pantothenate synthetase.